The primary structure comprises 535 residues: Alpha-1,3-mannosyl-glycoprotein 4-beta-N-acetylglucosaminyltransferase A (535 aa).

Residues 1–4 (MRLR) are Cytoplasmic-facing. A helical; Signal-anchor for type II membrane protein transmembrane segment spans residues 5–27 (NGTVATALAFITSFLTLSWYTTW). Residues 28–63 (QNGKEKLIAYQREFLALKERLRIAEHRISQRSSELN) are a coiled coil. The Lumenal portion of the chain corresponds to 28–535 (QNGKEKLIAY…NEIHIKKATK (508 aa)). N-linked (GlcNAc...) asparagine glycans are attached at residues asparagine 77 and asparagine 458. Serine 474 carries the post-translational modification Phosphoserine.

The protein belongs to the glycosyltransferase 54 family. A divalent metal cation serves as cofactor. N-glycosylated.

It localises to the golgi apparatus membrane. Its subcellular location is the secreted. The enzyme catalyses N(4)-{beta-D-GlcNAc-(1-&gt;2)-alpha-D-Man-(1-&gt;3)-[beta-D-GlcNAc-(1-&gt;2)-alpha-D-Man-(1-&gt;6)]-beta-D-Man-(1-&gt;4)-beta-D-GlcNAc-(1-&gt;4)-beta-D-GlcNAc}-L-asparaginyl-[protein] + UDP-N-acetyl-alpha-D-glucosamine = N(4)-{beta-D-GlcNAc-(1-&gt;2)-[beta-D-GlcNAc-(1-&gt;4)]-alpha-D-Man-(1-&gt;3)-[beta-D-GlcNAc-(1-&gt;2)-alpha-D-Man-(1-&gt;6)]-beta-D-Man-(1-&gt;4)-beta-D-GlcNAc-(1-&gt;4)-beta-D-GlcNAc}-L-asparaginyl-[protein] + UDP + H(+). The catalysed reaction is an N(4)-{beta-D-GlcNAc-(1-&gt;2)-alpha-D-Man-(1-&gt;3)-[alpha-D-Man-(1-&gt;6)]-beta-D-Man-(1-&gt;4)-beta-D-GlcNAc-(1-&gt;4)-beta-D-GlcNAc}-L-asparaginyl-[protein] + UDP-N-acetyl-alpha-D-glucosamine = an N(4)-{beta-D-GlcNAc-(1-&gt;2)-[beta-D-GlcNAc-(1-&gt;4)]-alpha-D-Man-(1-&gt;3)-[alpha-D-Man-(1-&gt;6)]-beta-D-Man-(1-&gt;4)-beta-D-GlcNAc-(1-&gt;4)-beta-D-GlcNAc}-L-asparaginyl-[protein] + UDP + H(+). It catalyses the reaction an N(4)-{beta-D-GlcNAc-(1-&gt;2)-alpha-D-Man-(1-&gt;3)-[beta-D-GlcNAc-(1-&gt;2)-[beta-D-GlcNAc-(1-&gt;6)]-alpha-D-Man-(1-&gt;6)]-beta-D-Man-(1-&gt;4)-beta-D-GlcNAc-(1-&gt;4)-beta-D-GlcNAc}-L-asparaginyl-[protein] + UDP-N-acetyl-alpha-D-glucosamine = an N(4)-{beta-D-GlcNAc-(1-&gt;2)-[beta-D-GlcNAc-(1-&gt;4)]-alpha-D-Man-(1-&gt;3)-[beta-D-GlcNAc-(1-&gt;2)-[beta-D-GlcNAc-(1-&gt;6)]-alpha-D-Man-(1-&gt;6)]-beta-D-Man-(1-&gt;4)-beta-D-GlcNAc-(1-&gt;4)-beta-D-GlcNAc}-L-asparaginyl-[protein] + UDP + H(+). It carries out the reaction an N(4)-{beta-D-GlcNAc-(1-&gt;2)-alpha-D-Man-(1-&gt;3)-[beta-D-GlcNAc-(1-&gt;2)-alpha-D-Man-(1-&gt;6)]-beta-D-Man-(1-&gt;4)-beta-D-GlcNAc-(1-&gt;4)-[alpha-L-Fuc-(1-&gt;6)]-beta-D-GlcNAc}-L-asparaginyl-[protein] + UDP-N-acetyl-alpha-D-glucosamine = N(4)-{beta-D-GlcNAc-(1-&gt;2)-[beta-D-GlcNAc-(1-&gt;4)]-alpha-D-Man-(1-&gt;3)-[beta-D-GlcNAc-(1-&gt;2)-alpha-D-Man-(1-&gt;6)]-beta-D-Man-(1-&gt;4)-beta-D-GlcNAc-(1-&gt;4)-[alpha-L-Fuc-(1-&gt;6)]-beta-D-GlcNAc}-asparaginyl-[protein] + UDP + H(+). The enzyme catalyses an N(4)-{beta-D-GlcNAc-(1-&gt;2)-alpha-D-Man-(1-&gt;3)-[beta-D-Gal-(1-&gt;4)-beta-D-GlcNAc-(1-&gt;2)-alpha-D-Man-(1-&gt;6)]-beta-D-Man-(1-&gt;4)-beta-D-GlcNAc-(1-&gt;4)-beta-D-GlcNAc}-L-asparaginyl-[protein] + UDP-N-acetyl-alpha-D-glucosamine = an N(4)-{beta-D-GlcNAc-(1-&gt;2)-[beta-D-GlcNAc-(1-&gt;4)]-alpha-D-Man-(1-&gt;3)-[beta-D-Gal-(1-&gt;4)-beta-D-GlcNAc-(1-&gt;2)-alpha-D-Man-(1-&gt;6)]-beta-D-Man-(1-&gt;4)-beta-D-GlcNAc-(1-&gt;4)-beta-D-GlcNAc}-L-asparaginyl-[protein] + UDP + H(+). The catalysed reaction is N(4)-{beta-D-GlcNAc-(1-&gt;2)-alpha-D-Man-(1-&gt;3)-[alpha-D-Man-(1-&gt;3)-{alpha-D-Man-(1-&gt;6)}-alpha-D-Man-(1-&gt;6)]-beta-D-Man-(1-&gt;4)-beta-D-GlcNAc-(1-&gt;4)-beta-D-GlcNAc}-asparaginyl-[protein] + UDP-N-acetyl-alpha-D-glucosamine = N(4)-{beta-D-GlcNAc-(1-&gt;2)-[beta-D-GlcNAc-(1-&gt;4)]-alpha-D-Man-(1-&gt;3)-[alpha-D-Man-(1-&gt;3)-{alpha-D-Man-(1-&gt;6)}-alpha-D-Man-(1-&gt;6)]-beta-D-Man-(1-&gt;4)-beta-D-GlcNAc-(1-&gt;4)-beta-D-GlcNAc}-asparaginyl-[protein] + UDP + H(+). It catalyses the reaction N(4)-{beta-D-GlcNAc-(1-&gt;2)-alpha-D-Man-(1-&gt;3)-beta-D-Man-(1-&gt;4)-beta-D-GlcNAc-(1-&gt;4)-beta-D-GlcNAc}-asparaginyl-[protein] + UDP-N-acetyl-alpha-D-glucosamine = N(4)-{beta-D-GlcNAc-(1-&gt;2)-[beta-D-GlcNAc-(1-&gt;4)]-alpha-D-Man-(1-&gt;3)-beta-D-Man-(1-&gt;4)-beta-D-GlcNAc-(1-&gt;4)-beta-D-GlcNAc}-asparaginyl-[protein] + UDP + H(+). The protein operates within protein modification; protein glycosylation. Its activity is regulated as follows. Inhibited by UDP. Its function is as follows. Glycosyltransferase that catalyze the transfer of GlcNAc from UDP-GlcNAc to the GlcNAcbeta1-2Manalpha1-3 arm of the core structure of N-linked glycans through a beta1-4 linkage and participates in the production of tri- and tetra-antennary N-linked sugar chains. Involved in glucose transport by mediating SLC2A2/GLUT2 glycosylation, thereby controlling cell-surface expression of SLC2A2 in pancreatic beta cells. In Macaca fascicularis (Crab-eating macaque), this protein is Alpha-1,3-mannosyl-glycoprotein 4-beta-N-acetylglucosaminyltransferase A.